A 301-amino-acid polypeptide reads, in one-letter code: uncharacterized protein (301 aa).

The N-terminal stretch at 1–25 is a signal peptide; sequence MKFKNTLSIFKILIILFSFYNVAFS. At 26-279 the chain is on the extracellular side; that stretch reads DDTEKYTFKG…STTGSKDSST (254 aa). The disordered stretch occupies residues 174–281; sequence LYTGSSNTPN…TGSKDSSTGN (108 aa). N-linked (GlcNAc...) asparagine glycans are attached at residues Asn-191, Asn-212, Asn-234, and Asn-241. Residues 204-234 are compositionally biased toward low complexity; sequence SSSDSTNSNSSSTDTASSSPSSSPSSSPSPN. A compositionally biased stretch (low complexity) spans 254 to 281; it reads GGVETSTAGSSTGTTSSTTGSKDSSTGN. Residues 280-300 traverse the membrane as a helical segment; sequence GNSILPTLIIVTFFVLTLVIM. Position 301 (Ser-301) is a topological domain, cytoplasmic.

Its subcellular location is the membrane. This is an uncharacterized protein from Dictyostelium discoideum (Social amoeba).